A 523-amino-acid polypeptide reads, in one-letter code: Galactarate dehydratase (L-threo-forming) (523 aa).

This sequence belongs to the UxaA family. As to quaternary structure, homodimer. Requires Fe(2+) as cofactor.

The enzyme catalyses galactarate = 5-dehydro-4-deoxy-D-glucarate + H2O. Its pathway is carbohydrate acid metabolism; galactarate degradation; D-glycerate from galactarate: step 1/3. Catalyzes the dehydration of galactarate to form 5-dehydro-4-deoxy-D-glucarate (5-KDG). This chain is Galactarate dehydratase (L-threo-forming), found in Escherichia coli (strain K12).